The following is a 488-amino-acid chain: UDP-N-acetylmuramoyl-L-alanyl-D-glutamate--2,6-diaminopimelate ligase (488 aa).

Residues L24, S26, and 41 to 43 (HQV) each bind UDP-N-acetyl-alpha-D-muramoyl-L-alanyl-D-glutamate. ATP is bound at residue 113–119 (GTNGKTT). Residues N154, 155–156 (TT), S182, Q188, and R190 contribute to the UDP-N-acetyl-alpha-D-muramoyl-L-alanyl-D-glutamate site. K222 is modified (N6-carboxylysine). Meso-2,6-diaminopimelate contacts are provided by residues R386, 410–413 (DNPR), G461, and E465. The short motif at 410–413 (DNPR) is the Meso-diaminopimelate recognition motif element.

Belongs to the MurCDEF family. MurE subfamily. The cofactor is Mg(2+). In terms of processing, carboxylation is probably crucial for Mg(2+) binding and, consequently, for the gamma-phosphate positioning of ATP.

The protein localises to the cytoplasm. The catalysed reaction is UDP-N-acetyl-alpha-D-muramoyl-L-alanyl-D-glutamate + meso-2,6-diaminopimelate + ATP = UDP-N-acetyl-alpha-D-muramoyl-L-alanyl-gamma-D-glutamyl-meso-2,6-diaminopimelate + ADP + phosphate + H(+). The protein operates within cell wall biogenesis; peptidoglycan biosynthesis. Its function is as follows. Catalyzes the addition of meso-diaminopimelic acid to the nucleotide precursor UDP-N-acetylmuramoyl-L-alanyl-D-glutamate (UMAG) in the biosynthesis of bacterial cell-wall peptidoglycan. The chain is UDP-N-acetylmuramoyl-L-alanyl-D-glutamate--2,6-diaminopimelate ligase from Haemophilus influenzae (strain ATCC 51907 / DSM 11121 / KW20 / Rd).